The following is a 116-amino-acid chain: Large ribosomal subunit protein bL19 (116 aa).

The protein belongs to the bacterial ribosomal protein bL19 family.

Functionally, this protein is located at the 30S-50S ribosomal subunit interface and may play a role in the structure and function of the aminoacyl-tRNA binding site. This chain is Large ribosomal subunit protein bL19, found in Haemophilus ducreyi (strain 35000HP / ATCC 700724).